A 402-amino-acid polypeptide reads, in one-letter code: tRNA(Met) cytidine acetate ligase (402 aa).

ATP-binding positions include 7-20 (ITEY…HELH), G102, N171, and R196.

The protein belongs to the TmcAL family.

The protein localises to the cytoplasm. It carries out the reaction cytidine(34) in elongator tRNA(Met) + acetate + ATP = N(4)-acetylcytidine(34) in elongator tRNA(Met) + AMP + diphosphate. Catalyzes the formation of N(4)-acetylcytidine (ac(4)C) at the wobble position of elongator tRNA(Met), using acetate and ATP as substrates. First activates an acetate ion to form acetyladenylate (Ac-AMP) and then transfers the acetyl group to tRNA to form ac(4)C34. This chain is tRNA(Met) cytidine acetate ligase, found in Clostridium perfringens (strain SM101 / Type A).